Here is a 128-residue protein sequence, read N- to C-terminus: Small ribosomal subunit protein bS6 (128 aa).

Belongs to the bacterial ribosomal protein bS6 family.

Functionally, binds together with bS18 to 16S ribosomal RNA. The polypeptide is Small ribosomal subunit protein bS6 (Leifsonia xyli subsp. xyli (strain CTCB07)).